Consider the following 103-residue polypeptide: Floral defensin-like protein 1 (103 aa).

Residues 1-25 (MARSICFFAVAILALMLFAAYDAEA) form the signal peptide. 5 cysteine pairs are disulfide-bonded: C28-C72, C32-C48, C39-C59, C45-C66, and C49-C68. The propeptide at 73–103 (VFEKTEATQTETFTKDVNTLAEALLEADMMV) is removed in mature form.

Belongs to the DEFL family. When compared to other plant defensins, the petunia defensins have an additional fifth disulfide bond. In terms of tissue distribution, petals.

It localises to the secreted. The protein localises to the vacuole. Functionally, plant defense peptide with antifungal activity against F.oxysporum and B.cinerea. In Petunia hybrida (Petunia), this protein is Floral defensin-like protein 1 (D1).